A 473-amino-acid polypeptide reads, in one-letter code: FAD-dependent oxidoreductase dpasF (473 aa).

Positions Met-1–Ala-21 are cleaved as a signal peptide. Residues Asn-26, Asn-54, Asn-92, Asn-133, Asn-185, Asn-276, and Asn-401 are each glycosylated (N-linked (GlcNAc...) asparagine).

The protein belongs to the beta-cyclopiazonate dehydrogenase family. It depends on FAD as a cofactor.

It participates in secondary metabolite biosynthesis; terpenoid biosynthesis. Functionally, FAD-dependent oxidoreductase; part of the gene cluster that mediates the biosynthesis of the diterpenoid pyrones subglutinols A and B. The first step of the pathway is the synthesis of the alpha-pyrone moiety by the polyketide synthase dpasA via condensation of one acetyl-CoA starter unit with 3 malonyl-CoA units and 2 methylations. The alpha-pyrone is then combined with geranylgeranyl pyrophosphate (GGPP) formed by the GGPP synthase dpasD through the action of the prenyltransferase dpasC to yield a linear alpha-pyrone diterpenoid. Subsequent steps in the diterpenoid pyrone biosynthetic pathway involve the decalin core formation, which is initiated by the epoxidation of the C10-C11 olefin by the FAD-dependent oxidoreductase dpasE, and is followed by a cyclization cascade catalyzed by the terpene cyclase dpasB. The FAD-linked oxidoreductase dpasF is then involved in tetrahydrofuran (THF) ring formation at the C5 unit to complete the formation of subglutinols A and B. DpasF possesses also an additional catalytic ability of multi-step oxidations to generate a new DDP analog with an enone system at the C5 named FDDP A. This Apiospora sacchari (Arthrinium sacchari) protein is FAD-dependent oxidoreductase dpasF.